The primary structure comprises 516 residues: MELHITPALALLREHHLLDHVSNLTDFTATSVSYDSRKVKSGTLFFCKGNFLPKYLASAKEKGAIAYVAEKEYPEGEGLPAIIVNDEQKAMSLLGAAFYGYPQNDLFIIAITGTKGKTTTAYFADHILAQSTADHIALFSTLDRILGNKPEDKFKSDLTTPESLDLFHDMRVAVDNGMTHLVMEVSSQAYKKNRIYGLKYDVGIFLNISPDHIGRNEHPTFADYLHCKEQLLVNSAKCLINAETEKFTDVYYTAKATTQPEDIFLFARRGANIELPDNAQIDFEYRNDLEDLHESEFELTALTEKAKQLNLDGRYKTSVPGDYNEGNAVAAIIASGLAGASANDAVETLNHVHIRGRMEMINSNTHGTIYVDYAHNYASLKRLLAFLKRQTNAGKVTVVLGATGDKGISRRPGFGKALTEEQPDEVILTTDDPGFEDPMTIAREIDSYIDHDKVKHIQFEMDRETAIKKAIDGSENDDIVVLAGKGEDPYQKVNGEDVPYPTDVKIARDYINELER.

Ser36 is a binding site for UDP-N-acetyl-alpha-D-muramoyl-L-alanyl-D-glutamate. Residue 113–119 (GTKGKTT) coordinates ATP. UDP-N-acetyl-alpha-D-muramoyl-L-alanyl-D-glutamate is bound by residues 159 to 160 (TT), Ser186, and Arg194. An N6-carboxylysine modification is found at Lys228.

The protein belongs to the MurCDEF family. MurE subfamily. In terms of processing, carboxylation is probably crucial for Mg(2+) binding and, consequently, for the gamma-phosphate positioning of ATP.

The protein resides in the cytoplasm. It functions in the pathway cell wall biogenesis; peptidoglycan biosynthesis. Functionally, catalyzes the addition of an amino acid to the nucleotide precursor UDP-N-acetylmuramoyl-L-alanyl-D-glutamate (UMAG) in the biosynthesis of bacterial cell-wall peptidoglycan. The protein is UDP-N-acetylmuramyl-tripeptide synthetase of Limosilactobacillus reuteri (strain DSM 20016) (Lactobacillus reuteri).